Reading from the N-terminus, the 65-residue chain is Hirudin-3 (65 aa).

The interval 1 to 3 (VVY) is interaction with thrombin active site. 3 cysteine pairs are disulfide-bonded: C6-C14, C16-C28, and C22-C39. The segment at 39–65 (CVTGEGTPKPQSHNDGDFEEIPEEYLQ) is disordered. Residue T45 is glycosylated (O-linked (GalNAc...) threonine). Residues 55–65 (DFEEIPEEYLQ) form an interaction with fibrinogen-binding exosite of thrombin region. Residues 55 to 65 (DFEEIPEEYLQ) show a composition bias toward acidic residues. A Sulfotyrosine modification is found at Y63.

This sequence belongs to the protease inhibitor I14 (hirudin) family.

The protein localises to the secreted. Hirudin is a potent thrombin-specific protease inhibitor. It forms a stable non-covalent complex with alpha-thrombin, thereby abolishing its ability to cleave fibrinogen. The sequence is that of Hirudin-3 from Hirudo medicinalis (Medicinal leech).